We begin with the raw amino-acid sequence, 860 residues long: Alanine--tRNA ligase (860 aa).

The Zn(2+) site is built by histidine 563, histidine 567, cysteine 665, and histidine 669.

The protein belongs to the class-II aminoacyl-tRNA synthetase family. The cofactor is Zn(2+).

The protein localises to the cytoplasm. The catalysed reaction is tRNA(Ala) + L-alanine + ATP = L-alanyl-tRNA(Ala) + AMP + diphosphate. In terms of biological role, catalyzes the attachment of alanine to tRNA(Ala) in a two-step reaction: alanine is first activated by ATP to form Ala-AMP and then transferred to the acceptor end of tRNA(Ala). Also edits incorrectly charged Ser-tRNA(Ala) and Gly-tRNA(Ala) via its editing domain. The chain is Alanine--tRNA ligase from Vibrio cholerae serotype O1 (strain ATCC 39541 / Classical Ogawa 395 / O395).